A 379-amino-acid polypeptide reads, in one-letter code: Queuine tRNA-ribosyltransferase (379 aa).

The active-site Proton acceptor is the Asp-94. Residues 94–98 (DSGGF), Asp-148, Gln-191, and Gly-218 contribute to the substrate site. The tract at residues 249 to 255 (GVGSPDS) is RNA binding. The Nucleophile role is filled by Asp-268. The segment at 273-277 (TRIGR) is RNA binding; important for wobble base 34 recognition. Residues Cys-306, Cys-308, Cys-311, and His-337 each coordinate Zn(2+).

Belongs to the queuine tRNA-ribosyltransferase family. Homodimer. Within each dimer, one monomer is responsible for RNA recognition and catalysis, while the other monomer binds to the replacement base PreQ1. Zn(2+) is required as a cofactor.

It catalyses the reaction 7-aminomethyl-7-carbaguanine + guanosine(34) in tRNA = 7-aminomethyl-7-carbaguanosine(34) in tRNA + guanine. Its pathway is tRNA modification; tRNA-queuosine biosynthesis. Its function is as follows. Catalyzes the base-exchange of a guanine (G) residue with the queuine precursor 7-aminomethyl-7-deazaguanine (PreQ1) at position 34 (anticodon wobble position) in tRNAs with GU(N) anticodons (tRNA-Asp, -Asn, -His and -Tyr). Catalysis occurs through a double-displacement mechanism. The nucleophile active site attacks the C1' of nucleotide 34 to detach the guanine base from the RNA, forming a covalent enzyme-RNA intermediate. The proton acceptor active site deprotonates the incoming PreQ1, allowing a nucleophilic attack on the C1' of the ribose to form the product. After dissociation, two additional enzymatic reactions on the tRNA convert PreQ1 to queuine (Q), resulting in the hypermodified nucleoside queuosine (7-(((4,5-cis-dihydroxy-2-cyclopenten-1-yl)amino)methyl)-7-deazaguanosine). In Anoxybacillus flavithermus (strain DSM 21510 / WK1), this protein is Queuine tRNA-ribosyltransferase.